We begin with the raw amino-acid sequence, 645 residues long: Translation factor GUF1, mitochondrial (645 aa).

The tr-type G domain occupies 44 to 228 (ENYRNFSIVA…AIIDRIPPPT (185 aa)). GTP-binding positions include 53–60 (AHVDHGKS), 120–124 (DTPGH), and 174–177 (NKID).

This sequence belongs to the TRAFAC class translation factor GTPase superfamily. Classic translation factor GTPase family. LepA subfamily.

The protein localises to the mitochondrion inner membrane. The enzyme catalyses GTP + H2O = GDP + phosphate + H(+). Its function is as follows. Promotes mitochondrial protein synthesis. May act as a fidelity factor of the translation reaction, by catalyzing a one-codon backward translocation of tRNAs on improperly translocated ribosomes. Binds to mitochondrial ribosomes in a GTP-dependent manner. This Saccharomyces cerevisiae (strain ATCC 204508 / S288c) (Baker's yeast) protein is Translation factor GUF1, mitochondrial.